Here is a 363-residue protein sequence, read N- to C-terminus: MKKTALYAWHEAAGAKIIDFGGYLMPVQYSGIIAEHTCVRTSAGLFDVSHMGNFMVKGRGAKAFLQHMTSNDVDKLSDGQAQYTLLLYPEGGIVDDLIIYRIDADTWFMVVNASNMEKDYSWLQEHLGSFEGVQLENHTEELSLIALQGPRSMEILDRVFTGGECSGIKPFHFRTVPFNGREVIVAATGYTGERGVEISVPNDAATALWVALMEAGSADGIQPIGLGARDTLRLEMGYPLYGHEINRETSPIEARLKWVTRLDKGNFVGRESCVAVDINPQRTVVGFMMHERAIPRQGFTVYNRDRKPLGSVCSGTMSPTLKQPIGTADVPRGYMKSGTPLYLEVRGKFYKGEVVKLPFVNRA.

The protein belongs to the GcvT family. In terms of assembly, the glycine cleavage system is composed of four proteins: P, T, L and H.

The enzyme catalyses N(6)-[(R)-S(8)-aminomethyldihydrolipoyl]-L-lysyl-[protein] + (6S)-5,6,7,8-tetrahydrofolate = N(6)-[(R)-dihydrolipoyl]-L-lysyl-[protein] + (6R)-5,10-methylene-5,6,7,8-tetrahydrofolate + NH4(+). Its function is as follows. The glycine cleavage system catalyzes the degradation of glycine. The polypeptide is Aminomethyltransferase (Prosthecochloris aestuarii (strain DSM 271 / SK 413)).